The following is a 485-amino-acid chain: Glutamyl-tRNA(Gln) amidotransferase subunit A (485 aa).

Residues lysine 78 and serine 153 each act as charge relay system in the active site. Catalysis depends on serine 177, which acts as the Acyl-ester intermediate.

It belongs to the amidase family. GatA subfamily. As to quaternary structure, heterotrimer of A, B and C subunits.

It catalyses the reaction L-glutamyl-tRNA(Gln) + L-glutamine + ATP + H2O = L-glutaminyl-tRNA(Gln) + L-glutamate + ADP + phosphate + H(+). In terms of biological role, allows the formation of correctly charged Gln-tRNA(Gln) through the transamidation of misacylated Glu-tRNA(Gln) in organisms which lack glutaminyl-tRNA synthetase. The reaction takes place in the presence of glutamine and ATP through an activated gamma-phospho-Glu-tRNA(Gln). The chain is Glutamyl-tRNA(Gln) amidotransferase subunit A from Pelobacter propionicus (strain DSM 2379 / NBRC 103807 / OttBd1).